We begin with the raw amino-acid sequence, 532 residues long: Deoxyribodipyrimidine photo-lyase (532 aa).

Residues 1 to 57 (MDSKKRSHSTGGEAENMESQESKAKRKPLQKHQFSKSNVVQKEEKDKTEGEEKGAEG) are disordered. The span at 24-34 (AKRKPLQKHQF) shows a compositional bias: basic residues. The span at 41–55 (QKEEKDKTEGEEKGA) shows a compositional bias: basic and acidic residues. The 133-residue stretch at 97–229 (QAFVYWMSRD…QVDAHNIVPC (133 aa)) folds into the Photolyase/cryptochrome alpha/beta domain. R322 lines the DNA pocket. Interaction with DNA stretches follow at residues 368–376 (EAVVRRELA) and 442–443 (GF). An FAD-binding site is contributed by 468–470 (YLN).

Belongs to the DNA photolyase class-2 family. The cofactor is FAD.

The catalysed reaction is cyclobutadipyrimidine (in DNA) = 2 pyrimidine residues (in DNA).. Involved in repair of UV radiation-induced DNA damage. Catalyzes the light-dependent monomerization (300-600 nm) of cyclobutyl pyrimidine dimers (in cis-syn configuration), which are formed between adjacent bases on the same DNA strand upon exposure to ultraviolet radiation. The sequence is that of Deoxyribodipyrimidine photo-lyase (PHR) from Potorous tridactylus (Potoroo).